The following is a 292-amino-acid chain: MSNNQAFMELGWRNDVGSLAVKDQGMMSERARSDEDRLINGLKWGYGYFDHDQTDNYLQIVPEIHKEVENAKEDLLVVVPDEHSETDDHHHIKDFSERSDHRFYLRNKHENPKKRRIQVLSSDDESEEFTREVPSVTRKGSKRRRRDEKMSNKMRKLQQLVPNCHKTDKVSVLDKTIEYMKNLQLQLQMMSTVGVNPYFLPATLGFGMHNHMLTAMASAHGLNPANHMMPSPLIPALNWPLPPFTNISFPHSSSQSLFLTTSSPASSPQSLHGLVPYFPSFLDFSSHAMRRL.

Positions 114–153 (KRRIQVLSSDDESEEFTREVPSVTRKGSKRRRRDEKMSNK) are disordered. A basic motif; degenerate region spans residues 134 to 147 (PSVTRKGSKRRRRD). In terms of domain architecture, bHLH spans 134-183 (PSVTRKGSKRRRRDEKMSNKMRKLQQLVPNCHKTDKVSVLDKTIEYMKNL). A compositionally biased stretch (basic residues) spans 139–153 (KGSKRRRRDEKMSNK). The Nuclear localization signal motif lies at 141–148 (SKRRRRDE). The segment at 148 to 183 (EKMSNKMRKLQQLVPNCHKTDKVSVLDKTIEYMKNL) is helix-loop-helix motif.

In terms of assembly, binds to FHY1 and FHL. Forms PHYA/FHY1/HFR1 complex. Homodimer and heterodimer with PIF3. Do not interact alone with either phytochrome A (phyA) or B (phyB), but REP1/PIF3 complex binds to phyA and phyB, preferentially to the Pfr forms. Forms non-functional heterodimer with PRE6, causing liberation of PIF4 from the transcriptionally inactive complex HFR1-PIF4. Repressed when bound to PRE1, PRE2 and PRE4. In terms of tissue distribution, mainly expressed in fruits and flowers and, to a lower extent, in leaves, stems, seedlings and roots.

Its subcellular location is the nucleus. Functionally, atypical bHLH transcription factor that regulates photomorphogenesis through modulation of phytochrome (e.g. PHYA) and cryptochrome signalings. Suppresses the transcriptional regulation activity of PIF4 by forming non-DNA-binding heterodimer. This is Transcription factor HFR1 from Arabidopsis thaliana (Mouse-ear cress).